The sequence spans 183 residues: Ribose 1,5-bisphosphate phosphokinase PhnN (183 aa).

ATP is bound at residue 6 to 13; that stretch reads GPSGAGKD.

The protein belongs to the ribose 1,5-bisphosphokinase family.

The catalysed reaction is alpha-D-ribose 1,5-bisphosphate + ATP = 5-phospho-alpha-D-ribose 1-diphosphate + ADP. The protein operates within metabolic intermediate biosynthesis; 5-phospho-alpha-D-ribose 1-diphosphate biosynthesis; 5-phospho-alpha-D-ribose 1-diphosphate from D-ribose 5-phosphate (route II): step 3/3. Catalyzes the phosphorylation of ribose 1,5-bisphosphate to 5-phospho-D-ribosyl alpha-1-diphosphate (PRPP). This Agrobacterium fabrum (strain C58 / ATCC 33970) (Agrobacterium tumefaciens (strain C58)) protein is Ribose 1,5-bisphosphate phosphokinase PhnN.